An 856-amino-acid chain; its full sequence is DNA mismatch repair protein MutS (856 aa).

618-625 (GPNMGGKS) contributes to the ATP binding site.

It belongs to the DNA mismatch repair MutS family.

Its function is as follows. This protein is involved in the repair of mismatches in DNA. It is possible that it carries out the mismatch recognition step. This protein has a weak ATPase activity. In Shewanella baltica (strain OS223), this protein is DNA mismatch repair protein MutS.